A 308-amino-acid polypeptide reads, in one-letter code: Ribosomal RNA small subunit methyltransferase H (308 aa).

Residues Gly-36–His-38, Asp-55, Phe-82, Asp-103, and Gln-110 each bind S-adenosyl-L-methionine.

It belongs to the methyltransferase superfamily. RsmH family.

It localises to the cytoplasm. It catalyses the reaction cytidine(1402) in 16S rRNA + S-adenosyl-L-methionine = N(4)-methylcytidine(1402) in 16S rRNA + S-adenosyl-L-homocysteine + H(+). Functionally, specifically methylates the N4 position of cytidine in position 1402 (C1402) of 16S rRNA. This is Ribosomal RNA small subunit methyltransferase H from Helicobacter pylori (strain J99 / ATCC 700824) (Campylobacter pylori J99).